The following is a 495-amino-acid chain: Phosphomethylpyrimidine synthase (495 aa).

Substrate contacts are provided by residues Asn125, Met154, Tyr183, His219, 239-241 (SRG), 280-283 (DGLR), and Glu319. His323 lines the Zn(2+) pocket. Tyr346 is a substrate binding site. His387 is a Zn(2+) binding site. The [4Fe-4S] cluster site is built by Cys467, Cys470, and Cys475.

The protein belongs to the ThiC family. Requires [4Fe-4S] cluster as cofactor.

It carries out the reaction 5-amino-1-(5-phospho-beta-D-ribosyl)imidazole + S-adenosyl-L-methionine = 4-amino-2-methyl-5-(phosphooxymethyl)pyrimidine + CO + 5'-deoxyadenosine + formate + L-methionine + 3 H(+). The protein operates within cofactor biosynthesis; thiamine diphosphate biosynthesis. Its function is as follows. Catalyzes the synthesis of the hydroxymethylpyrimidine phosphate (HMP-P) moiety of thiamine from aminoimidazole ribotide (AIR) in a radical S-adenosyl-L-methionine (SAM)-dependent reaction. This is Phosphomethylpyrimidine synthase from Leptospira interrogans serogroup Icterohaemorrhagiae serovar copenhageni (strain Fiocruz L1-130).